A 474-amino-acid polypeptide reads, in one-letter code: UDP-N-acetylmuramate--L-alanine ligase (474 aa).

115–121 serves as a coordination point for ATP; the sequence is GTHGKTT.

Belongs to the MurCDEF family.

It is found in the cytoplasm. The enzyme catalyses UDP-N-acetyl-alpha-D-muramate + L-alanine + ATP = UDP-N-acetyl-alpha-D-muramoyl-L-alanine + ADP + phosphate + H(+). Its pathway is cell wall biogenesis; peptidoglycan biosynthesis. In terms of biological role, cell wall formation. The chain is UDP-N-acetylmuramate--L-alanine ligase from Novosphingobium aromaticivorans (strain ATCC 700278 / DSM 12444 / CCUG 56034 / CIP 105152 / NBRC 16084 / F199).